A 282-amino-acid chain; its full sequence is Succinate dehydrogenase [ubiquinone] iron-sulfur subunit, mitochondrial (282 aa).

A mitochondrion-targeting transit peptide spans 1–26 (MAAVVFSLRRSGPVLRLSGALQVSRG). A 2Fe-2S ferredoxin-type domain is found at 42 to 135 (KKFAIYRWDP…VSKIYPLPHM (94 aa)). [2Fe-2S] cluster-binding residues include Cys-95, Cys-100, Cys-103, and Cys-115. The 4Fe-4S ferredoxin-type domain occupies 178–208 (DRDKLDGLYECILCACCSTSCPSYWWNADKY). Cys-188, Cys-191, and Cys-194 together coordinate [4Fe-4S] cluster. [3Fe-4S] cluster is bound at residue Cys-198. Trp-203 contributes to the a ubiquinone binding site. The [3Fe-4S] cluster site is built by Cys-245 and Cys-251. Cys-255 lines the [4Fe-4S] cluster pocket.

This sequence belongs to the succinate dehydrogenase/fumarate reductase iron-sulfur protein family. Component of complex II composed of four subunits: the flavoprotein (FP) sdha, iron-sulfur protein (IP) sdhb, and a cytochrome b composed of sdhc and sdhd. [2Fe-2S] cluster serves as cofactor. It depends on [3Fe-4S] cluster as a cofactor. [4Fe-4S] cluster is required as a cofactor.

The protein resides in the mitochondrion inner membrane. The catalysed reaction is a quinone + succinate = fumarate + a quinol. The enzyme catalyses (R)-malate + a quinone = enol-oxaloacetate + a quinol. It catalyses the reaction (S)-malate + a quinone = enol-oxaloacetate + a quinol. It functions in the pathway carbohydrate metabolism; tricarboxylic acid cycle; fumarate from succinate (eukaryal route): step 1/1. Its activity is regulated as follows. Enol-oxaloacetate inhibits the succinate dehydrogenase activity. In terms of biological role, iron-sulfur protein (IP) subunit of the succinate dehydrogenase complex (mitochondrial respiratory chain complex II), responsible for transferring electrons from succinate to ubiquinone (coenzyme Q). SDH also oxidizes malate to the non-canonical enol form of oxaloacetate, enol-oxaloacetate. Enol-oxaloacetate, which is a potent inhibitor of the succinate dehydrogenase activity, is further isomerized into keto-oxaloacetate. In Xenopus laevis (African clawed frog), this protein is Succinate dehydrogenase [ubiquinone] iron-sulfur subunit, mitochondrial (sdhb).